The following is a 326-amino-acid chain: uncharacterized protein (326 aa).

Residues 293-326 (HRNYDANHSTSGEEENSGSRSRIAELSQSTIHRR) are disordered.

This is an uncharacterized protein from Oryza latifolia (Indian wild rice).